The following is a 677-amino-acid chain: Methionine--tRNA ligase (677 aa).

The 'HIGH' region signature appears at 15–25; the sequence is PYANGSIHLGH. Cysteine 146, cysteine 149, cysteine 159, and cysteine 162 together coordinate Zn(2+). Positions 333-337 match the 'KMSKS' region motif; the sequence is KMSKS. Residue lysine 336 participates in ATP binding. The tRNA-binding domain occupies 575 to 677; the sequence is DFAKVDLRVA…AGAKPGHQVK (103 aa).

The protein belongs to the class-I aminoacyl-tRNA synthetase family. MetG type 1 subfamily. In terms of assembly, homodimer. Zn(2+) serves as cofactor.

It is found in the cytoplasm. It carries out the reaction tRNA(Met) + L-methionine + ATP = L-methionyl-tRNA(Met) + AMP + diphosphate. Is required not only for elongation of protein synthesis but also for the initiation of all mRNA translation through initiator tRNA(fMet) aminoacylation. This Escherichia coli O127:H6 (strain E2348/69 / EPEC) protein is Methionine--tRNA ligase.